The sequence spans 340 residues: MIILAIESSCDETGVGIAELSEDGTVTLLADEVASSVDEHARFGGVVPEIASRAHLEALGPTMRRALDTAGVGRPDVVAATIGPGLAGALLVGVAAAKAYSAAWQVPFYGVNHLGGHLAADVYDHGPLPESVGLLVSGGHTHLLHVRSLGEPIIELGSTVDDAAGEAYDKVARLLGLGYPGGKVLDDLARQGDREAIVFPRGMTGPRDDPFAFSFSGLKTAVARYVESHPEASQADVAAGFQEAVADVLTRKAVRAAETLGVSTLLIAGGVAANSRLRELAEQRCAESGLTLRIPRPRLCTDNGAMIASFAAHLIAAGAPPSPLEAASDPGLPVVRSQVA.

Histidine 113 and histidine 117 together coordinate Fe cation. Residues 135–139 (LVSGG), aspartate 169, glycine 182, aspartate 186, and asparagine 274 contribute to the substrate site. Fe cation is bound at residue aspartate 302.

It belongs to the KAE1 / TsaD family. Requires Fe(2+) as cofactor.

The protein resides in the cytoplasm. The enzyme catalyses L-threonylcarbamoyladenylate + adenosine(37) in tRNA = N(6)-L-threonylcarbamoyladenosine(37) in tRNA + AMP + H(+). Functionally, required for the formation of a threonylcarbamoyl group on adenosine at position 37 (t(6)A37) in tRNAs that read codons beginning with adenine. Is involved in the transfer of the threonylcarbamoyl moiety of threonylcarbamoyl-AMP (TC-AMP) to the N6 group of A37, together with TsaE and TsaB. TsaD likely plays a direct catalytic role in this reaction. This Mycobacterium sp. (strain KMS) protein is tRNA N6-adenosine threonylcarbamoyltransferase.